The chain runs to 573 residues: Protein FAM200A (573 aa).

The tract at residues 1–51 (MTPESRDTTDLSPRGTQEMEGIVVVKVEEEDEEDHFQKQRNKVESSPQVLS) is disordered. The Extracellular segment spans residues 1-513 (MTPESRDTTD…DEFPLLSRKS (513 aa)). The helical transmembrane segment at 514 to 533 (ISLLLPFTTTYLCELGFSIL) threads the bilayer. Residues 534–573 (TRLKTKKRNRLNSAPDMRVALSSCVPDWKELMNRQAHPSH) are Cytoplasmic-facing.

This sequence belongs to the FAM200 family.

The protein localises to the membrane. This is Protein FAM200A (FAM200A) from Macaca fascicularis (Crab-eating macaque).